We begin with the raw amino-acid sequence, 85 residues long: Small ribosomal subunit protein bS20 (85 aa).

Residues 1 to 22 are disordered; it reads MANIKSAIKRAKLSEERRAHNA.

This sequence belongs to the bacterial ribosomal protein bS20 family.

Its function is as follows. Binds directly to 16S ribosomal RNA. The sequence is that of Small ribosomal subunit protein bS20 from Bacillus cytotoxicus (strain DSM 22905 / CIP 110041 / 391-98 / NVH 391-98).